Here is an 88-residue protein sequence, read N- to C-terminus: MAQKKAGGSSRNGRDSAGRRLGVKKFGGESVIAGNIIVRQRGTKMKAGANVGIGRDHTLFALVDGHVKFQRRAEGRVHVSVALPEAAE.

Residues 1 to 22 (MAQKKAGGSSRNGRDSAGRRLG) form a disordered region.

Belongs to the bacterial ribosomal protein bL27 family.

The protein is Large ribosomal subunit protein bL27 of Gluconobacter oxydans (strain 621H) (Gluconobacter suboxydans).